Consider the following 190-residue polypeptide: dCTP deaminase, dUMP-forming (190 aa).

DCTP is bound by residues Lys101 to Arg106, Asp119, Thr127 to Glu129, Gln148, Tyr162, Lys170, and Gln174. Residue Glu129 is the Proton donor/acceptor of the active site. Residues His160–Thr190 form a disordered region. Over residues Tyr171–Thr190 the composition is skewed to polar residues.

Belongs to the dCTP deaminase family. Homotrimer.

It catalyses the reaction dCTP + 2 H2O = dUMP + NH4(+) + diphosphate. The protein operates within pyrimidine metabolism; dUMP biosynthesis; dUMP from dCTP: step 1/1. Its function is as follows. Bifunctional enzyme that catalyzes both the deamination of dCTP to dUTP and the hydrolysis of dUTP to dUMP without releasing the toxic dUTP intermediate. This chain is dCTP deaminase, dUMP-forming, found in Mycobacterium bovis (strain ATCC BAA-935 / AF2122/97).